A 306-amino-acid chain; its full sequence is MNVAVQSRVDRETIGVARKTKAYVALTKPRVIELLLVTTAPVMILAQGGWPNPWLILGVLVGGTLSAGSANAFNCYIDRDIDRVMKRTQRRPLVTGELTDREALVFAWIIGVASIIWLGVISNWLAAALSLAAILFYVFVYTLWLKRRTPQNIVWGGAAGCMPVLIGWAAVTGDISWAPVILFMIVFLWTPPHYWPLSMKYRDDYASVNVPMLAVVRGRAAVGLQTILYSWATLACSLLLIPVAGMGLVYTLAALAGGGWFVYETHRLYDLAVRHEPIKPMRVFHASISYLSLLFLAVGIDPLLPF.

Transmembrane regions (helical) follow at residues 31–50, 55–77, 104–124, 125–145, 168–188, 218–235, 238–258, and 286–306; these read VIEL…QGGW, LILG…NCYI, LVFA…ISNW, LAAA…TLWL, WAAV…IVFL, GRAA…ATLA, LLLI…LAGG, and ASIS…LLPF.

This sequence belongs to the UbiA prenyltransferase family. Protoheme IX farnesyltransferase subfamily.

Its subcellular location is the cell membrane. The enzyme catalyses heme b + (2E,6E)-farnesyl diphosphate + H2O = Fe(II)-heme o + diphosphate. The protein operates within porphyrin-containing compound metabolism; heme O biosynthesis; heme O from protoheme: step 1/1. Functionally, converts heme B (protoheme IX) to heme O by substitution of the vinyl group on carbon 2 of heme B porphyrin ring with a hydroxyethyl farnesyl side group. This chain is Protoheme IX farnesyltransferase, found in Clavibacter sepedonicus (Clavibacter michiganensis subsp. sepedonicus).